The following is a 113-amino-acid chain: Colipase (113 aa).

The signal sequence occupies residues 1–18 (MEKVLVLLLVSLLAVAYA). Positions 19–23 (APGPR) are cleaved as a propeptide — enterostatin, activation peptide. Disulfide bonds link C35–C46, C41–C57, C45–C79, C67–C87, and C81–C105.

It belongs to the colipase family. As to quaternary structure, forms a 1:1 stoichiometric complex with pancreatic lipase. As to expression, expressed by the pancreas.

The protein localises to the secreted. Functionally, colipase is a cofactor of pancreatic lipase. It allows the lipase to anchor itself to the lipid-water interface. Without colipase the enzyme is washed off by bile salts, which have an inhibitory effect on the lipase. In terms of biological role, enterostatin has a biological activity as a satiety signal. This Mus musculus (Mouse) protein is Colipase.